Here is a 274-residue protein sequence, read N- to C-terminus: Nickel/cobalt efflux system RcnA (274 aa).

The Periplasmic segment spans residues 1-12 (MGEFPTLLQQGN). A helical membrane pass occupies residues 13–33 (GWFFIPSAILLGILHGLEPGH). At 34 to 51 (SKTMMAAFIIAIKGTVKQ) the chain is on the cytoplasmic side. Residues 52–72 (AVMLGLAATLSHTAIVWLIAL) traverse the membrane as a helical segment. The Periplasmic portion of the chain corresponds to 73–85 (GGMYLSRAFTAQS). The helical transmembrane segment at 86-106 (VEPWLQLISAIIILSTACWMF) threads the bilayer. The Cytoplasmic segment spans residues 107-174 (WRTWRGEQQW…FDGQTVTNGQ (68 aa)). Residues 122 to 141 (HHDHDHDHDHDHDHHGHIHP) show a composition bias toward basic and acidic residues. The segment at 122–143 (HHDHDHDHDHDHDHHGHIHPEG) is disordered. The chain crosses the membrane as a helical span at residues 175–195 (ILLFGLTGGLIPCPAAITVLL). Over 196 to 209 (ICIQLKAFTLGATM) the chain is Periplasmic. The helical transmembrane segment at 210 to 230 (VLSFSLSLALTLVTVGVGAAI) threads the bilayer. Residues 231-251 (SVQQAAKRWSGFSTLARRAPY) lie on the Cytoplasmic side of the membrane. Residues 252–272 (FSSILIGLVGVYMGIHGYTGI) traverse the membrane as a helical segment. Topologically, residues 273-274 (MQ) are periplasmic.

This sequence belongs to the NiCoT transporter (TC 2.A.52) family. RcnA subfamily.

It is found in the cell inner membrane. Functionally, efflux system for nickel and cobalt. In Salmonella paratyphi A (strain ATCC 9150 / SARB42), this protein is Nickel/cobalt efflux system RcnA (rcnA).